The primary structure comprises 62 residues: Amolopin-P1 (62 aa).

The signal sequence occupies residues 1–22 (MFPMKKSLLLLFFFGPISLSFC). Residues 23–44 (DQERGADEEENGGEVTEQEVKR) constitute a propeptide that is removed on maturation.

As to expression, expressed by the skin glands.

The protein localises to the secreted. Antimicrobial peptide with activity against Gram-positive bacteria. Has been tested against S.aureus (MIC=37.5 ug/mL), against B.pumilus (MIC=75.0 ug/mL), B.cereus (no activity detected). Does not show activity against Gram-negative bacteria (E.coli, B.dysenteriae, A.calcoaceticus, P.aeruginosa) and fungi (C.albicans). Does not show hemolytic activity against rabbit erythrocytes. This chain is Amolopin-P1, found in Amolops loloensis (Lolokou Sucker Frog).